The primary structure comprises 863 residues: Glycogen phosphorylase (863 aa).

N6-(pyridoxal phosphate)lysine is present on Lys618.

The protein belongs to the glycogen phosphorylase family. Requires pyridoxal 5'-phosphate as cofactor.

The catalysed reaction is [(1-&gt;4)-alpha-D-glucosyl](n) + phosphate = [(1-&gt;4)-alpha-D-glucosyl](n-1) + alpha-D-glucose 1-phosphate. Phosphorylase is an important allosteric enzyme in carbohydrate metabolism. Enzymes from different sources differ in their regulatory mechanisms and in their natural substrates. However, all known phosphorylases share catalytic and structural properties. The sequence is that of Glycogen phosphorylase (glgP) from Mycobacterium tuberculosis (strain CDC 1551 / Oshkosh).